The chain runs to 299 residues: Nucleotide-binding protein SAV_6292 (299 aa).

Residue 23 to 30 (GMSGAGRS) participates in ATP binding. Position 74-77 (74-77 (DVRG)) interacts with GTP.

It belongs to the RapZ-like family.

Functionally, displays ATPase and GTPase activities. The sequence is that of Nucleotide-binding protein SAV_6292 from Streptomyces avermitilis (strain ATCC 31267 / DSM 46492 / JCM 5070 / NBRC 14893 / NCIMB 12804 / NRRL 8165 / MA-4680).